Here is a 147-residue protein sequence, read N- to C-terminus: Large ribosomal subunit protein bL9 (147 aa).

This sequence belongs to the bacterial ribosomal protein bL9 family.

Binds to the 23S rRNA. This chain is Large ribosomal subunit protein bL9, found in Clostridium acetobutylicum (strain ATCC 824 / DSM 792 / JCM 1419 / IAM 19013 / LMG 5710 / NBRC 13948 / NRRL B-527 / VKM B-1787 / 2291 / W).